We begin with the raw amino-acid sequence, 142 residues long: Large ribosomal subunit protein uL13 (142 aa).

Belongs to the universal ribosomal protein uL13 family. In terms of assembly, part of the 50S ribosomal subunit.

Functionally, this protein is one of the early assembly proteins of the 50S ribosomal subunit, although it is not seen to bind rRNA by itself. It is important during the early stages of 50S assembly. This is Large ribosomal subunit protein uL13 from Pseudomonas fluorescens (strain Pf0-1).